Consider the following 224-residue polypeptide: Small ribosomal subunit protein uS3 (224 aa).

In terms of domain architecture, KH type-2 spans Ile38 to Lys106.

The protein belongs to the universal ribosomal protein uS3 family. In terms of assembly, part of the 30S ribosomal subunit. Forms a tight complex with proteins S10 and S14.

Binds the lower part of the 30S subunit head. Binds mRNA in the 70S ribosome, positioning it for translation. This chain is Small ribosomal subunit protein uS3, found in Lactobacillus helveticus (strain DPC 4571).